Consider the following 209-residue polypeptide: Pyridoxine/pyridoxamine 5'-phosphate oxidase (209 aa).

Substrate contacts are provided by residues 5–8 (REEY) and Lys63. Residues 58 to 63 (RVVLLK), 73 to 74 (FT), Arg79, Lys80, and Gln102 each bind FMN. Residues Tyr120, Arg124, and Ser128 each contribute to the substrate site. FMN contacts are provided by residues 137–138 (QS) and Trp181. 187 to 189 (RLH) lines the substrate pocket. Arg191 is an FMN binding site.

It belongs to the pyridoxamine 5'-phosphate oxidase family. In terms of assembly, homodimer. The cofactor is FMN.

The catalysed reaction is pyridoxamine 5'-phosphate + O2 + H2O = pyridoxal 5'-phosphate + H2O2 + NH4(+). It catalyses the reaction pyridoxine 5'-phosphate + O2 = pyridoxal 5'-phosphate + H2O2. Its pathway is cofactor metabolism; pyridoxal 5'-phosphate salvage; pyridoxal 5'-phosphate from pyridoxamine 5'-phosphate: step 1/1. It participates in cofactor metabolism; pyridoxal 5'-phosphate salvage; pyridoxal 5'-phosphate from pyridoxine 5'-phosphate: step 1/1. Catalyzes the oxidation of either pyridoxine 5'-phosphate (PNP) or pyridoxamine 5'-phosphate (PMP) into pyridoxal 5'-phosphate (PLP). The chain is Pyridoxine/pyridoxamine 5'-phosphate oxidase from Alcanivorax borkumensis (strain ATCC 700651 / DSM 11573 / NCIMB 13689 / SK2).